The sequence spans 316 residues: MADTAITVDGAEKRYGDKKALDGLDLRVARGTVHGVLGPNGAGKTTLVRVLSTLLRPDAGRIEVSGHDVVREAYAVRLRIGLLGQHAALDEELGGRQNLELFGRLHHLGARRARARADELLERFDLADTGRKTVRQYSGGMRRRLDLAASLITEPEVLFLDEPTTGLDPRGRAEVWDSVRSLVGGGTTVLLTTQYLEEADQLADRISVVDAGRVIAEGTADELKAETGGDRIDVVLREAGQLGAAVALLPLTGVTVDTDRRLLSAPVTDRMEALSGVVRALQEAGIEAEDVALRRPTLDEVFLHLTGDDRRVKEAA.

The 231-residue stretch at 6–236 folds into the ABC transporter domain; sequence ITVDGAEKRY…TGGDRIDVVL (231 aa). ATP is bound at residue 38–45; that stretch reads GPNGAGKT.

This sequence belongs to the ABC transporter superfamily. Drug exporter-1 (DrugE1) (TC 3.A.1.105) family. In terms of assembly, the complex is probably composed of two ATP-binding proteins (DrrA3) and two transmembrane proteins (DrrB3).

It is found in the cell membrane. It carries out the reaction daunorubicin(in) + ATP + H2O = daunorubicin(out) + ADP + phosphate + H(+). Its function is as follows. Part of the ABC transporter complex DrrA3B3 involved in daunorubicin efflux. Responsible for energy coupling to the transport system. Confers self-resistance to daunorubicin, an antibiotic produced by S.coeruleorubidus. The efficiency of DrrA3B3 to export daunorubicin is probably lower than that of DrrA1B1 or DrrA2B2. In Streptomyces coeruleorubidus, this protein is Daunorubicin resistance ATP-binding protein DrrA3.